A 154-amino-acid chain; its full sequence is Small ribosomal subunit protein uS19B (154 aa).

S63 is subject to Phosphoserine.

Belongs to the universal ribosomal protein uS19 family. In terms of assembly, component of the small ribosomal subunit (SSU). Mature yeast ribosomes consist of a small (40S) and a large (60S) subunit. The 40S small subunit contains 1 molecule of ribosomal RNA (18S rRNA) and at least 33 different proteins. The large 60S subunit contains 3 rRNA molecules (25S, 5.8S and 5S rRNA) and at least 46 different proteins.

It is found in the cytoplasm. It localises to the nucleus. The protein localises to the nucleolus. Functionally, component of the ribosome, a large ribonucleoprotein complex responsible for the synthesis of proteins in the cell. The small ribosomal subunit (SSU) binds messenger RNAs (mRNAs) and translates the encoded message by selecting cognate aminoacyl-transfer RNA (tRNA) molecules. The large subunit (LSU) contains the ribosomal catalytic site termed the peptidyl transferase center (PTC), which catalyzes the formation of peptide bonds, thereby polymerizing the amino acids delivered by tRNAs into a polypeptide chain. The nascent polypeptides leave the ribosome through a tunnel in the LSU and interact with protein factors that function in enzymatic processing, targeting, and the membrane insertion of nascent chains at the exit of the ribosomal tunnel. uS19 is involved in the nuclear export of the small ribosomal subunit precursor. Has a role in the late stage of the assembly of pre-40S particles within the nucleus and controls their export to the cytoplasm. The polypeptide is Small ribosomal subunit protein uS19B (rps1502) (Schizosaccharomyces pombe (strain 972 / ATCC 24843) (Fission yeast)).